The sequence spans 563 residues: Rab escort protein 1 (563 aa).

Positions 538–563 (ELFKEETSPAENTTEEENDGGVEIED) are disordered. Over residues 550 to 563 (TTEEENDGGVEIED) the composition is skewed to acidic residues.

This sequence belongs to the Rab GDI family. As to quaternary structure, heterotrimer composed of the alpha subunit RGTA, the beta subunit RGTB and REP; within this trimer, RGTA and RGTB form the catalytic component, while REP mediates peptide substrate binding. As to expression, expressed in roots, leaves and flowers.

It is found in the cytoplasm. In terms of biological role, substrate-binding subunit of the Rab geranylgeranyltransferase (GGTase) complex. Binds unprenylated Rab proteins and presents the substrate peptide to the catalytic component composed of the alpha subunit RGTA and the beta subunit RGTB. Preferentially binds the GDP-bound form of Rab and stimulates geranylgeranylation of various Rab GTPases in vitro. The polypeptide is Rab escort protein 1 (Arabidopsis thaliana (Mouse-ear cress)).